Here is a 159-residue protein sequence, read N- to C-terminus: Phosphopantetheine adenylyltransferase (159 aa).

A substrate-binding site is contributed by Thr-10. ATP is bound by residues 10–11 and His-18; that span reads TF. Residues Lys-42, Met-74, and Arg-88 each coordinate substrate. ATP contacts are provided by residues 89-91, Glu-99, and 124-130; these read GLR and WSFISSS.

The protein belongs to the bacterial CoaD family. Homohexamer. Requires Mg(2+) as cofactor.

The protein localises to the cytoplasm. It catalyses the reaction (R)-4'-phosphopantetheine + ATP + H(+) = 3'-dephospho-CoA + diphosphate. It functions in the pathway cofactor biosynthesis; coenzyme A biosynthesis; CoA from (R)-pantothenate: step 4/5. In terms of biological role, reversibly transfers an adenylyl group from ATP to 4'-phosphopantetheine, yielding dephospho-CoA (dPCoA) and pyrophosphate. This is Phosphopantetheine adenylyltransferase from Pectobacterium carotovorum subsp. carotovorum (strain PC1).